An 89-amino-acid chain; its full sequence is Small ribosomal subunit protein uS14 (89 aa).

Belongs to the universal ribosomal protein uS14 family. In terms of assembly, part of the 30S ribosomal subunit. Contacts proteins S3 and S10.

Its function is as follows. Binds 16S rRNA, required for the assembly of 30S particles and may also be responsible for determining the conformation of the 16S rRNA at the A site. This is Small ribosomal subunit protein uS14 from Amoebophilus asiaticus (strain 5a2).